The primary structure comprises 397 residues: Tryptophan synthase beta chain (397 aa).

Residue K87 is modified to N6-(pyridoxal phosphate)lysine.

This sequence belongs to the TrpB family. Tetramer of two alpha and two beta chains. The cofactor is pyridoxal 5'-phosphate.

The catalysed reaction is (1S,2R)-1-C-(indol-3-yl)glycerol 3-phosphate + L-serine = D-glyceraldehyde 3-phosphate + L-tryptophan + H2O. It functions in the pathway amino-acid biosynthesis; L-tryptophan biosynthesis; L-tryptophan from chorismate: step 5/5. Its function is as follows. The beta subunit is responsible for the synthesis of L-tryptophan from indole and L-serine. This is Tryptophan synthase beta chain from Klebsiella pneumoniae (strain 342).